The primary structure comprises 338 residues: GTPase Obg (338 aa).

In terms of domain architecture, Obg spans 1–159; the sequence is MKFLDKAIIH…RILRLELILI (159 aa). The 174-residue stretch at 160 to 333 folds into the OBG-type G domain; the sequence is AHVGTLGLPN…IVKKIYDFLK (174 aa). Residues 166-173, 191-195, 213-216, 283-286, and 314-316 contribute to the GTP site; these read GLPNSGKS, FTTLK, DIPG, NKID, and SAI. Residues Ser173 and Thr193 each coordinate Mg(2+).

It belongs to the TRAFAC class OBG-HflX-like GTPase superfamily. OBG GTPase family. As to quaternary structure, monomer. Mg(2+) serves as cofactor.

It localises to the cytoplasm. In terms of biological role, an essential GTPase which binds GTP, GDP and possibly (p)ppGpp with moderate affinity, with high nucleotide exchange rates and a fairly low GTP hydrolysis rate. Plays a role in control of the cell cycle, stress response, ribosome biogenesis and in those bacteria that undergo differentiation, in morphogenesis control. The polypeptide is GTPase Obg (Buchnera aphidicola subsp. Baizongia pistaciae (strain Bp)).